The chain runs to 194 residues: Large ribosomal subunit protein uL6m (194 aa).

Belongs to the universal ribosomal protein uL6 family.

The protein localises to the mitochondrion. The polypeptide is Large ribosomal subunit protein uL6m (RPL6) (Prototheca wickerhamii).